A 262-amino-acid polypeptide reads, in one-letter code: Hydroxyethylthiazole kinase (262 aa).

A substrate-binding site is contributed by Met-50. ATP is bound by residues Arg-125 and Thr-171. Residue Gly-198 coordinates substrate.

Belongs to the Thz kinase family. Mg(2+) serves as cofactor.

The catalysed reaction is 5-(2-hydroxyethyl)-4-methylthiazole + ATP = 4-methyl-5-(2-phosphooxyethyl)-thiazole + ADP + H(+). It participates in cofactor biosynthesis; thiamine diphosphate biosynthesis; 4-methyl-5-(2-phosphoethyl)-thiazole from 5-(2-hydroxyethyl)-4-methylthiazole: step 1/1. Its function is as follows. Catalyzes the phosphorylation of the hydroxyl group of 4-methyl-5-beta-hydroxyethylthiazole (THZ). The sequence is that of Hydroxyethylthiazole kinase from Citrobacter koseri (strain ATCC BAA-895 / CDC 4225-83 / SGSC4696).